The primary structure comprises 66 residues: Large ribosomal subunit protein uL29 (66 aa).

It belongs to the universal ribosomal protein uL29 family.

The protein is Large ribosomal subunit protein uL29 of Geobacillus kaustophilus (strain HTA426).